We begin with the raw amino-acid sequence, 170 residues long: Adenine phosphoribosyltransferase (170 aa).

Belongs to the purine/pyrimidine phosphoribosyltransferase family. In terms of assembly, homodimer.

It localises to the cytoplasm. It catalyses the reaction AMP + diphosphate = 5-phospho-alpha-D-ribose 1-diphosphate + adenine. It participates in purine metabolism; AMP biosynthesis via salvage pathway; AMP from adenine: step 1/1. Catalyzes a salvage reaction resulting in the formation of AMP, that is energically less costly than de novo synthesis. This Enterococcus faecalis (strain ATCC 700802 / V583) protein is Adenine phosphoribosyltransferase.